A 338-amino-acid chain; its full sequence is Glutamyl-tRNA reductase (338 aa).

Residues 50–53, serine 102, 107–109, and glutamine 113 each bind substrate; these read TCHR and ETE. Cysteine 51 (nucleophile) is an active-site residue. 181 to 186 contributes to the NADP(+) binding site; it reads GYSDIN.

The protein belongs to the glutamyl-tRNA reductase family. As to quaternary structure, homodimer.

The catalysed reaction is (S)-4-amino-5-oxopentanoate + tRNA(Glu) + NADP(+) = L-glutamyl-tRNA(Glu) + NADPH + H(+). It functions in the pathway porphyrin-containing compound metabolism; protoporphyrin-IX biosynthesis; 5-aminolevulinate from L-glutamyl-tRNA(Glu): step 1/2. In terms of biological role, catalyzes the NADPH-dependent reduction of glutamyl-tRNA(Glu) to glutamate 1-semialdehyde (GSA). The sequence is that of Glutamyl-tRNA reductase from Chlamydia caviae (strain ATCC VR-813 / DSM 19441 / 03DC25 / GPIC) (Chlamydophila caviae).